The primary structure comprises 547 residues: Vacuolar fusion protein MON1 homolog B (547 aa).

Met-1 carries the post-translational modification N-acetylmethionine. The segment at 1–106 (MEAGGDTAAP…GGDPSDEEWR (106 aa)) is disordered. Residues 57-66 (PPSPSPPPQS) show a composition bias toward pro residues. 2 positions are modified to phosphoserine: Ser-59 and Ser-61.

The protein belongs to the MON1/SAND family. As to quaternary structure, interacts with CCNT2; down-regulates CCNT2-mediated activation of viral promoters during herpes simplex virus 1/HHV-1 infection. Found in a complex with RMC1, CCZ1 MON1A and MON1B.

The sequence is that of Vacuolar fusion protein MON1 homolog B (MON1B) from Macaca fascicularis (Crab-eating macaque).